The primary structure comprises 179 residues: uncharacterized protein (179 aa).

Disordered stretches follow at residues 26–103 and 136–179; these read LSAV…SYED and KHKA…SWFN. Residues 34–61 are compositionally biased toward basic and acidic residues; sequence QQGKNEEQRQHDEWVAERNREIQQEKQR. Low complexity predominate over residues 63 to 79; that stretch reads ANAQAAANKRAATAAAN. Basic and acidic residues-rich tracts occupy residues 82–103 and 158–179; these read ARQD…SYED and GGRD…SWFN.

This is an uncharacterized protein from Escherichia coli (strain K12).